The following is a 380-amino-acid chain: Tryptophan--tRNA ligase (380 aa).

The 'HIGH' region motif lies at 81 to 89 (PSLGMHIGH). The 'KMSKS' region signature appears at 253 to 257 (KMSSS).

It belongs to the class-I aminoacyl-tRNA synthetase family.

The protein resides in the cytoplasm. The catalysed reaction is tRNA(Trp) + L-tryptophan + ATP = L-tryptophyl-tRNA(Trp) + AMP + diphosphate + H(+). This Saccharolobus solfataricus (strain ATCC 35092 / DSM 1617 / JCM 11322 / P2) (Sulfolobus solfataricus) protein is Tryptophan--tRNA ligase.